The sequence spans 419 residues: UDP-N-acetylglucosamine 1-carboxyvinyltransferase (419 aa).

Residue 22–23 (KN) participates in phosphoenolpyruvate binding. A UDP-N-acetyl-alpha-D-glucosamine-binding site is contributed by R91. The active-site Proton donor is the C115. C115 is modified (2-(S-cysteinyl)pyruvic acid O-phosphothioketal). UDP-N-acetyl-alpha-D-glucosamine-binding positions include 120-124 (RPVDL), 160-163 (KVSV), D305, and I327.

Belongs to the EPSP synthase family. MurA subfamily.

The protein localises to the cytoplasm. The enzyme catalyses phosphoenolpyruvate + UDP-N-acetyl-alpha-D-glucosamine = UDP-N-acetyl-3-O-(1-carboxyvinyl)-alpha-D-glucosamine + phosphate. The protein operates within cell wall biogenesis; peptidoglycan biosynthesis. Its function is as follows. Cell wall formation. Adds enolpyruvyl to UDP-N-acetylglucosamine. The sequence is that of UDP-N-acetylglucosamine 1-carboxyvinyltransferase from Citrobacter koseri (strain ATCC BAA-895 / CDC 4225-83 / SGSC4696).